We begin with the raw amino-acid sequence, 577 residues long: Arginine--tRNA ligase (577 aa).

The 'HIGH' region signature appears at 122-132 (PNVAKEMHVGH).

It belongs to the class-I aminoacyl-tRNA synthetase family. As to quaternary structure, monomer.

The protein resides in the cytoplasm. It carries out the reaction tRNA(Arg) + L-arginine + ATP = L-arginyl-tRNA(Arg) + AMP + diphosphate. The chain is Arginine--tRNA ligase from Salmonella schwarzengrund (strain CVM19633).